The primary structure comprises 598 residues: MLKLVGGGGGQDWACSVAGTSLGGEEAAFEVARPGDQGKAGGGSPGWGCAGIPDSAPGAGVLQAGAVGPARGGQGAEEVGESAGGGEERRVRHPQAPALRLLNRKPQGGSGEIKTPENDLQRGRLSRGPRTAPPAPGMGDRSGQQERSVPHSPGAPVGTSAAAVNGLLHNGFHPPPVQPPHVCSRGPVGGSDAAPQRLPLLPELQPQPLLPQHDSPAKKCRLRRRMDSGRKNRPPFPWFGMDIGGTLVKLVYFEPKDITAEEEQEEVENLKSIRKYLTSNTAYGKTGIRDVHLELKNLTMCGRKGNLHFIRFPSCAMHRFIQMGSEKNFSSLHTTLCATGGGAFKFEEDFRMIADLQLHKLDELDCLIQGLLYVDSVGFNGKPECYYFENPTNPELCQKKPYCLDNPYPMLLVNMGSGVSILAVYSKDNYKRVTGTSLGGGTFLGLCCLLTGCETFEEALEMAAKGDSTNVDKLVKDIYGGDYERFGLQGSAVASSFGNMMSKEKRDSISKEDLARATLVTITNNIGSIARMCALNENIDRVVFVGNFLRINMVSMKLLAYAMDFWSKGQLKALFLEHEGYFGAVGALLELFKMTDDK.

Residues 32-161 (ARPGDQGKAG…SPGAPVGTSA (130 aa)) form a disordered region. Gly residues predominate over residues 38-49 (GKAGGGSPGWGC). A Phosphoserine modification is found at Ser-215. A Nucleolar localization signal motif is present at residues 218–235 (KKCRLRRRMDSGRKNRPP). Glu-363 acts as the Proton acceptor in catalysis. Residues Ser-417, Ser-420, and Arg-432 each coordinate acetyl-CoA.

This sequence belongs to the type II pantothenate kinase family. In terms of assembly, homodimer. Expressed at high levels in brain, heart, kidney, liver, skeletal muscle and testis. As to expression, detected at much lower levels in kidney, liver, brain and testis and not detected in heart or skeletal muscle.

The protein localises to the cytoplasm. It is found in the nucleus. Its subcellular location is the nucleolus. The protein resides in the cytosol. It localises to the cytoplasmic vesicle. The protein localises to the clathrin-coated vesicle. It is found in the recycling endosome. The catalysed reaction is (R)-pantothenate + ATP = (R)-4'-phosphopantothenate + ADP + H(+). It participates in cofactor biosynthesis; coenzyme A biosynthesis; CoA from (R)-pantothenate: step 1/5. Its activity is regulated as follows. Regulated by feedback inhibition by CoA and its thioesters. Catalyzes the phosphorylation of pantothenate to generate 4'-phosphopantothenate in the first and rate-determining step of coenzyme A (CoA) synthesis. The polypeptide is Pantothenate kinase 1 (PANK1) (Homo sapiens (Human)).